The primary structure comprises 406 residues: Fosmidomycin resistance protein (406 aa).

Over 1 to 42 the chain is Periplasmic; the sequence is MAMSEQPQPVAGAAASTTKARTSFGILGAISLSHLLNDMIQS. A run of 2 helical transmembrane segments spans residues 43 to 63 and 64 to 84; these read LILA…MQIG and MITL…GYWT. Topologically, residues 85-102 are periplasmic; that stretch reads DKYPMPWSLPIGMCFTLS. The chain crosses the membrane as a helical span at residues 103–123; that stretch reads GLVLLALAGSFGAVLLAAALV. The Cytoplasmic segment spans residues 124 to 151; the sequence is GTGSSVFHPESSRVARMASGGRHGLAQS. The helical transmembrane segment at 152–172 threads the bilayer; it reads IFQVGGNFGSSLGPLLAAVII. Residues 173-177 lie on the Periplasmic side of the membrane; that stretch reads APYGK. The helical transmembrane segment at 178–198 threads the bilayer; the sequence is GNVAWFVLAALLAIVVLAQIS. Over 199-225 the chain is Cytoplasmic; it reads RWYSAQHRMNKGKPKATIINPLPRNKV. Residues 226 to 246 form a helical membrane-spanning segment; the sequence is VLAVSILLILIFSKYFYMASI. Over 247-266 the chain is Periplasmic; that stretch reads SSYYTFYLMQKFGLSIQNAQ. The chain crosses the membrane as a helical span at residues 267 to 287; it reads LHLFAFLFAVAAGTVIGGPVG. Residues 288 to 294 are Cytoplasmic-facing; sequence DKIGRKY. A helical transmembrane segment spans residues 295-315; the sequence is VIWGSILGVAPFTLILPYASL. Over 316 to 319 the chain is Periplasmic; sequence HWTG. A helical membrane pass occupies residues 320-340; it reads VLTVIIGFILASAFSAILVYA. Over 341–353 the chain is Cytoplasmic; the sequence is QELLPGRIGMVSG. Residues 354–374 form a helical membrane-spanning segment; the sequence is LFFGFAFGMGGLGAAVLGLIA. The Periplasmic portion of the chain corresponds to 375 to 378; the sequence is DHTS. The chain crosses the membrane as a helical span at residues 379–399; that stretch reads IELVYKICAFLPLLGMLTIFL. The Cytoplasmic portion of the chain corresponds to 400–406; the sequence is PDNRHKD.

This sequence belongs to the major facilitator superfamily.

The protein localises to the cell inner membrane. In terms of biological role, confers the resistance against fosmidomycin. In Escherichia coli (strain K12), this protein is Fosmidomycin resistance protein (fsr).